Reading from the N-terminus, the 130-residue chain is MKMCDMFQTADWKTEKHVPAIECDDAVAADAFFPVTVSLGKEIAHPNTTEHHIRWIRCYFKPEGDKFSYEVGSFEFTAHGECAKGPNEGPVYTNHTVTFQLKIKTPGVLVASSFCNIHGLWESSKAVALK.

6 residues coordinate Fe cation: Glu-15, His-17, His-45, His-51, Cys-115, and His-118.

Belongs to the desulfoferrodoxin family. Monomer. Requires Fe cation as cofactor.

It carries out the reaction 2 superoxide + 2 H(+) = H2O2 + O2. Functionally, non-heme iron protein. This chain is Neelaredoxin (nlr), found in Megalodesulfovibrio gigas (Desulfovibrio gigas).